The following is a 188-amino-acid chain: ATP synthase subunit b (188 aa).

Residues 19 to 39 (LPAVYDIVWSAVVFVVLLVVI) form a helical membrane-spanning segment.

Belongs to the ATPase B chain family. As to quaternary structure, F-type ATPases have 2 components, F(1) - the catalytic core - and F(0) - the membrane proton channel. F(1) has five subunits: alpha(3), beta(3), gamma(1), delta(1), epsilon(1). F(0) has three main subunits: a(1), b(2) and c(10-14). The alpha and beta chains form an alternating ring which encloses part of the gamma chain. F(1) is attached to F(0) by a central stalk formed by the gamma and epsilon chains, while a peripheral stalk is formed by the delta and b chains.

The protein localises to the cell membrane. F(1)F(0) ATP synthase produces ATP from ADP in the presence of a proton or sodium gradient. F-type ATPases consist of two structural domains, F(1) containing the extramembraneous catalytic core and F(0) containing the membrane proton channel, linked together by a central stalk and a peripheral stalk. During catalysis, ATP synthesis in the catalytic domain of F(1) is coupled via a rotary mechanism of the central stalk subunits to proton translocation. Its function is as follows. Component of the F(0) channel, it forms part of the peripheral stalk, linking F(1) to F(0). In Clavibacter michiganensis subsp. michiganensis (strain NCPPB 382), this protein is ATP synthase subunit b.